A 902-amino-acid chain; its full sequence is MGRRNRRATRHGESSKSALIDCHIPEEHFLQSTDPKEKTKNAGGAVEHTPLMKQFFAAKSDYPDLLLFFRMGDFYELFYDDARKAARLLDITLTQRGSSGGAPIPMAGVPVHAYEGYLARLVALGESVAICEQIGDPALAKGLVERKVVRIVTPGTVTDEALLDERRDTLLMAISRSKQGYGLAWADLAGGRFLVNEVDSADALEAEIARLEPAELLVPDEDNWPEFLRGRIGVRRRPPWLFDADSGRRQLLAFFKLHDLSGFGIDDKPCATAAAGALLGYVEETQKQRLPHLTSIAMEVASEAISMNAATRRHLELDTRVDGDTRNTLLGVLDSTVTPMGGRLLRRWLHRPLRLRDVLVQRHHAVGTLIDAAADADLREAFRALGDLERILTRVALRSARPRDFSTLRDGLALLPKVRAILAPLDSPRLQALHAELGEHDATAHLLISAVAETPPLKLSDGGVIATGYDADLDELRRLSTNADQFLIDLEQRERASSGIATLKVGYNRVHGYYIEISKGQAEKAPLHYSRRQTLTNAERYITEELKSFEDKVLSARERSLSREKLLYEGLLDALGTELEGLKRCAGALSELDVLAGFAERAQALDWSQPELDSAPCLRIERGRHPVVEAVREQPFEPNDLDLHSDRRMLVITGPNMGGKSTYMRQNALIVLLAHIGSYVPASRAVIGPIDRILTRIGAGDDLARGQSTFMVEMAETSYILHHATPQSLVLMDEIGRGTSTYDGLALADAVARHLAQTNRCYTLFATHYFELTALADASHAGGASGIANVHLDAVEHGERLVFMHAVKDGPANRSFGLQVAALAGLPKAAVTQARRRLAELEQRGGESHSAQMAPTALDAPQQFGLFTAPSSAAQEALQALDPDELTPKQALEALYRLKALL.

654–661 (GPNMGGKS) provides a ligand contact to ATP.

This sequence belongs to the DNA mismatch repair MutS family.

Functionally, this protein is involved in the repair of mismatches in DNA. It is possible that it carries out the mismatch recognition step. This protein has a weak ATPase activity. This chain is DNA mismatch repair protein MutS, found in Xanthomonas axonopodis pv. citri (strain 306).